Reading from the N-terminus, the 205-residue chain is Small ribosomal subunit protein uS4 (205 aa).

The 63-residue stretch at 110–172 (RRLQTIIYRK…VGSPITKEKL (63 aa)) folds into the S4 RNA-binding domain. Residues 173–205 (MAKPQPASAPKAAAAPKAAAAPAEAAAAPKKEE) are disordered. Residues 174–205 (AKPQPASAPKAAAAPKAAAAPAEAAAAPKKEE) show a composition bias toward low complexity.

Belongs to the universal ribosomal protein uS4 family. As to quaternary structure, part of the 30S ribosomal subunit. Contacts protein S5. The interaction surface between S4 and S5 is involved in control of translational fidelity.

Functionally, one of the primary rRNA binding proteins, it binds directly to 16S rRNA where it nucleates assembly of the body of the 30S subunit. In terms of biological role, with S5 and S12 plays an important role in translational accuracy. The polypeptide is Small ribosomal subunit protein uS4 (Methanocella arvoryzae (strain DSM 22066 / NBRC 105507 / MRE50)).